We begin with the raw amino-acid sequence, 282 residues long: Phospholipid phosphatase 1 (282 aa).

The Cytoplasmic segment spans residues 1 to 6 (MFDKPR). Residues 5–7 (PRL) carry the PDZ-binding; involved in localization to the apical cell membrane motif. Residues 7–27 (LPYVVLDVICVLLAGLPFIIL) form a helical membrane-spanning segment. The Extracellular segment spans residues 28–53 (TSRHTPFQRGVFCTDESIKYPYREDT). The chain crosses the membrane as a helical span at residues 54 to 74 (IPYALLGGIVIPFCIIVMITG). Over 75 to 88 (ETLSVYFNVLHSNS) the chain is Cytoplasmic. Residues 89-109 (FVSNHYIATIYKAVGAFLFGA) traverse the membrane as a helical segment. Residues 110-164 (SASQSLTDIAKYSIGRLRPHFLAVCNPDWSKINCSDGYIENFVCQGNEQKVREGR) are Extracellular-facing. A phosphatase sequence motif I region spans residues 120-128 (KYSIGRLRP). N142 is a glycosylation site (N-linked (GlcNAc...) asparagine). A helical membrane pass occupies residues 165 to 185 (LSFYSGHSSFSMYCMLFVALY). Positions 168–171 (YSGH) are phosphatase sequence motif II. H171 serves as the catalytic Proton donors. Residues 186 to 194 (LQARMKGDW) lie on the Cytoplasmic side of the membrane. The chain crosses the membrane as a helical span at residues 195–215 (ARLLRPMLQFGLVALSIYVGL). The interval 216-227 (SRVSDYKHHWSD) is phosphatase sequence motif III. The Extracellular portion of the chain corresponds to 216 to 229 (SRVSDYKHHWSDVL). H223 (nucleophile) is an active-site residue. A helical membrane pass occupies residues 230–250 (IGLIQGAVVAILVVLYVTDFF). Over 251–282 (KTTESNKERKEDSHTTLHETTNRQSYARNHEP) the chain is Cytoplasmic. Positions 257–271 (KERKEDSHTTLHETT) are enriched in basic and acidic residues. The disordered stretch occupies residues 257 to 282 (KERKEDSHTTLHETTNRQSYARNHEP). The segment covering 272–282 (NRQSYARNHEP) has biased composition (polar residues).

Belongs to the PA-phosphatase related phosphoesterase family. In terms of assembly, forms functional homodimers and homooligomers that are not required for substrate recognition and catalytic activity. Can also form heterooligomers with PLPP2 and PLPP3. In terms of processing, N-glycosylated. N-linked sugars are of the complex type. N-glycosylation is not required for the phosphatase activity.

Its subcellular location is the cell membrane. It localises to the apical cell membrane. The protein resides in the membrane raft. It is found in the membrane. The protein localises to the caveola. The catalysed reaction is a 1,2-diacyl-sn-glycero-3-phosphate + H2O = a 1,2-diacyl-sn-glycerol + phosphate. It catalyses the reaction 1,2-dihexadecanoyl-sn-glycero-3-phosphate + H2O = 1,2-dihexadecanoyl-sn-glycerol + phosphate. The enzyme catalyses 1,2-di-(9Z-octadecenoyl)-sn-glycero-3-phosphate + H2O = 1,2-di-(9Z-octadecenoyl)-sn-glycerol + phosphate. It carries out the reaction a monoacyl-sn-glycero-3-phosphate + H2O = a monoacylglycerol + phosphate. The catalysed reaction is (9Z)-octadecenoyl-sn-glycero-3-phosphate + H2O = (9Z-octadecenoyl)-glycerol + phosphate. It catalyses the reaction a 1-acyl-sn-glycero-3-phosphate + H2O = a 1-acyl-sn-glycerol + phosphate. The enzyme catalyses 1-(9Z-octadecenoyl)-sn-glycero-3-phosphate + H2O = 1-(9Z-octadecenoyl)-sn-glycerol + phosphate. It carries out the reaction a 1,2-diacyl-sn-glycerol 3-diphosphate + H2O = a 1,2-diacyl-sn-glycero-3-phosphate + phosphate + H(+). The catalysed reaction is sphing-4-enine 1-phosphate + H2O = sphing-4-enine + phosphate. It catalyses the reaction an N-acylsphing-4-enine 1-phosphate + H2O = an N-acylsphing-4-enine + phosphate. The enzyme catalyses N-(octanoyl)-sphing-4-enine-1-phosphate + H2O = N-octanoylsphing-4-enine + phosphate. It carries out the reaction N-(9Z-octadecenoyl)-ethanolamine phosphate + H2O = N-(9Z-octadecenoyl) ethanolamine + phosphate. The catalysed reaction is 1-hexadecanoyl-2-(9Z-octadecenoyl)-sn-glycero-3-phosphate + H2O = 1-hexadecanoyl-2-(9Z-octadecenoyl)-sn-glycerol + phosphate. It functions in the pathway lipid metabolism; phospholipid metabolism. With respect to regulation, magnesium-independent phospholipid phosphatase. Insensitive to N-ethylmaleimide. Its function is as follows. Magnesium-independent phospholipid phosphatase of the plasma membrane that catalyzes the dephosphorylation of a variety of glycerolipid and sphingolipid phosphate esters including phosphatidate/PA, lysophosphatidate/LPA, diacylglycerol pyrophosphate/DGPP, sphingosine 1-phosphate/S1P and ceramide 1-phosphate/C1P. Also acts on N-oleoyl ethanolamine phosphate/N-(9Z-octadecenoyl)-ethanolamine phosphate, a potential physiological compound. Through its extracellular phosphatase activity allows both the hydrolysis and the cellular uptake of these bioactive lipid mediators from the milieu, regulating signal transduction in different cellular processes. It is for instance essential for the extracellular hydrolysis of S1P and subsequent conversion into intracellular S1P. Involved in the regulation of inflammation, platelets activation, cell proliferation and migration among other processes. May also have an intracellular activity to regulate phospholipid-mediated signaling pathways. The sequence is that of Phospholipid phosphatase 1 from Rattus norvegicus (Rat).